The chain runs to 331 residues: Ferrochelatase (331 aa).

Residues His-187 and Glu-286 each contribute to the Fe cation site.

Belongs to the ferrochelatase family.

It localises to the cytoplasm. It catalyses the reaction heme b + 2 H(+) = protoporphyrin IX + Fe(2+). Its pathway is porphyrin-containing compound metabolism; protoheme biosynthesis; protoheme from protoporphyrin-IX: step 1/1. In terms of biological role, catalyzes the ferrous insertion into protoporphyrin IX. This Legionella pneumophila (strain Corby) protein is Ferrochelatase.